We begin with the raw amino-acid sequence, 159 residues long: Transcription elongation factor GreA (159 aa).

The protein belongs to the GreA/GreB family.

Functionally, necessary for efficient RNA polymerase transcription elongation past template-encoded arresting sites. The arresting sites in DNA have the property of trapping a certain fraction of elongating RNA polymerases that pass through, resulting in locked ternary complexes. Cleavage of the nascent transcript by cleavage factors such as GreA or GreB allows the resumption of elongation from the new 3'terminus. GreA releases sequences of 2 to 3 nucleotides. This Orientia tsutsugamushi (strain Ikeda) (Rickettsia tsutsugamushi) protein is Transcription elongation factor GreA.